The sequence spans 541 residues: MQATIEKLKATASSTAATDLRAAFAADDQRFSRFSVKFDDLLMDYSKCAVNEEIVTLLEQLAREGGVEAKREEMFSGKAINFTEDRAVLHTALRNRSNTPVLVDDKDVMPDVNGVLAAMGKFADAIRSGSLKGATGKKITDVVNIGIGGSDLGPVMATLALAPFHDGPRAHFVSNIDGAHIADTLKLLDPETSLFIIASKTFTTIETMTNAATARRFIAEKLGEGAVKHHFAAVSTALDKVAAFGIESDRIFGFWDWVGGRYSIWSAIGLPLMIAIGPDNFGKFLDGAHAMDRHFREAPIRENLPMLLGLIGFYNRNVLDYPTRAILPYDQRLSRFPAYLQQLDMESNGKGVTIDGTPVEGQSGPVVWGEPGTNGQHAFYQLIHQGTSVIPAEFMIAANGFEPELRHQHQLLIANCLAQSEALMKGRTLAEAKAQLTSKGMEDSQADFIAPHRVFTGNRPSITFVYDKLTPFALGRLIALYEHRVFVEGVLFRINSFDQWGVELGKELATGLLPVVEGKESAAGHDSSTQGLVKALAGLAG.

The active-site Proton donor is the Glu-346. Catalysis depends on residues His-377 and Lys-506.

This sequence belongs to the GPI family.

The protein localises to the cytoplasm. It catalyses the reaction alpha-D-glucose 6-phosphate = beta-D-fructose 6-phosphate. It functions in the pathway carbohydrate biosynthesis; gluconeogenesis. Its pathway is carbohydrate degradation; glycolysis; D-glyceraldehyde 3-phosphate and glycerone phosphate from D-glucose: step 2/4. Catalyzes the reversible isomerization of glucose-6-phosphate to fructose-6-phosphate. This chain is Glucose-6-phosphate isomerase, found in Agrobacterium fabrum (strain C58 / ATCC 33970) (Agrobacterium tumefaciens (strain C58)).